Reading from the N-terminus, the 526-residue chain is tRNA-2-methylthio-N(6)-dimethylallyladenosine synthase (526 aa).

The segment at 1–24 (MTQQLNHAKVNQHPGQATLPETAE) is disordered. In terms of domain architecture, MTTase N-terminal spans 28–144 (RTYEVKTYGC…LPTLLQRAEH (117 aa)). The [4Fe-4S] cluster site is built by C37, C73, C107, C181, C185, and C188. A Radical SAM core domain is found at 167 to 403 (RESAYAGWVS…MVVQEQVCEE (237 aa)). The 72-residue stretch at 406 to 477 (QKLIGTTVEL…PFFLIADSGV (72 aa)) folds into the TRAM domain.

This sequence belongs to the methylthiotransferase family. MiaB subfamily. Monomer. Requires [4Fe-4S] cluster as cofactor.

The protein resides in the cytoplasm. It carries out the reaction N(6)-dimethylallyladenosine(37) in tRNA + (sulfur carrier)-SH + AH2 + 2 S-adenosyl-L-methionine = 2-methylsulfanyl-N(6)-dimethylallyladenosine(37) in tRNA + (sulfur carrier)-H + 5'-deoxyadenosine + L-methionine + A + S-adenosyl-L-homocysteine + 2 H(+). Catalyzes the methylthiolation of N6-(dimethylallyl)adenosine (i(6)A), leading to the formation of 2-methylthio-N6-(dimethylallyl)adenosine (ms(2)i(6)A) at position 37 in tRNAs that read codons beginning with uridine. This chain is tRNA-2-methylthio-N(6)-dimethylallyladenosine synthase, found in Corynebacterium glutamicum (strain R).